A 337-amino-acid polypeptide reads, in one-letter code: Cytoskeleton protein RodZ (337 aa).

Residues 1–111 lie on the Cytoplasmic side of the membrane; sequence MNTEATHDQN…LGKRRKKRDG (111 aa). The 53-residue stretch at 19–71 folds into the HTH cro/C1-type domain; it reads LRNAREQLGLSQQAVAERLCLKVSTVRDIEEDKAPADLASTFLRGYIRSYARL. A DNA-binding region (H-T-H motif) is located at residues 30-49; sequence QQAVAERLCLKVSTVRDIEE. A helical; Signal-anchor for type II membrane protein membrane pass occupies residues 112–132; the sequence is WLMTFTWLVLFVVIGLSGAWW. Over 133–337 the chain is Periplasmic; it reads WQDHKAQQEE…TLNAEQSPAQ (205 aa). Positions 145–167 are enriched in polar residues; sequence TMADQSSAELSSNSEQGQSVPLN. The segment at 145 to 218 is disordered; it reads TMADQSSAEL…AVVSPSQANV (74 aa). Over residues 168-207 the composition is skewed to low complexity; that stretch reads TSTTTDPATTSTPPASVDTTATNTQTPAVTAPAPAVDPQQ. Positions 208-218 are enriched in polar residues; sequence NAVVSPSQANV.

It belongs to the RodZ family.

Its subcellular location is the cell inner membrane. Functionally, cytoskeletal protein that is involved in cell-shape control through regulation of the length of the long axis. In Shigella dysenteriae serotype 1 (strain Sd197), this protein is Cytoskeleton protein RodZ.